The chain runs to 342 residues: Protein-glutamate methylesterase/protein-glutamine glutaminase 2 (342 aa).

Positions 2–119 (NIGIVNDLPL…GGSADPSQPL (118 aa)) constitute a Response regulatory domain. Asp-53 is subject to 4-aspartylphosphate. The region spanning 144-337 (PAPQGALPPL…DQLISLVQRN (194 aa)) is the CheB-type methylesterase domain. Catalysis depends on residues Ser-159, His-186, and Asp-279.

It belongs to the CheB family. Post-translationally, phosphorylated by CheA. Phosphorylation of the N-terminal regulatory domain activates the methylesterase activity.

The protein resides in the cytoplasm. The catalysed reaction is [protein]-L-glutamate 5-O-methyl ester + H2O = L-glutamyl-[protein] + methanol + H(+). The enzyme catalyses L-glutaminyl-[protein] + H2O = L-glutamyl-[protein] + NH4(+). Functionally, involved in chemotaxis. Part of a chemotaxis signal transduction system that modulates chemotaxis in response to various stimuli. Catalyzes the demethylation of specific methylglutamate residues introduced into the chemoreceptors (methyl-accepting chemotaxis proteins or MCP) by CheR. Also mediates the irreversible deamidation of specific glutamine residues to glutamic acid. In Burkholderia mallei (strain ATCC 23344), this protein is Protein-glutamate methylesterase/protein-glutamine glutaminase 2.